A 255-amino-acid chain; its full sequence is Ribonuclease HII (255 aa).

The region spanning 58–247 (RYIAGIDEAG…VKSMVLGARY (190 aa)) is the RNase H type-2 domain. Residues D64, E65, and D156 each contribute to the a divalent metal cation site.

The protein belongs to the RNase HII family. Mn(2+) is required as a cofactor. It depends on Mg(2+) as a cofactor.

The protein localises to the cytoplasm. It carries out the reaction Endonucleolytic cleavage to 5'-phosphomonoester.. Functionally, endonuclease that specifically degrades the RNA of RNA-DNA hybrids. The chain is Ribonuclease HII from Syntrophomonas wolfei subsp. wolfei (strain DSM 2245B / Goettingen).